The primary structure comprises 410 residues: Argininosuccinate synthase (410 aa).

Position 10-18 (A10–S18) interacts with ATP. 2 residues coordinate L-citrulline: Y88 and S93. G118 is a binding site for ATP. Residues T120, N124, and D125 each coordinate L-aspartate. Position 124 (N124) interacts with L-citrulline. The L-citrulline site is built by R128, S177, S186, E262, and Y274.

It belongs to the argininosuccinate synthase family. Type 1 subfamily. As to quaternary structure, homotetramer.

Its subcellular location is the cytoplasm. The catalysed reaction is L-citrulline + L-aspartate + ATP = 2-(N(omega)-L-arginino)succinate + AMP + diphosphate + H(+). Its pathway is amino-acid biosynthesis; L-arginine biosynthesis; L-arginine from L-ornithine and carbamoyl phosphate: step 2/3. This Thermoanaerobacter pseudethanolicus (strain ATCC 33223 / 39E) (Clostridium thermohydrosulfuricum) protein is Argininosuccinate synthase.